The primary structure comprises 227 residues: tRNA (guanine-N(7)-)-methyltransferase (227 aa).

Positions 1 to 21 (MPDMTMKSQPDRLYGRQRGHA) are disordered. S-adenosyl-L-methionine contacts are provided by Glu54, Glu79, Asp114, and Asp136. Asp136 is an active-site residue. Substrate contacts are provided by residues Lys140, Asp172, and 206–209 (TRYE).

It belongs to the class I-like SAM-binding methyltransferase superfamily. TrmB family.

It catalyses the reaction guanosine(46) in tRNA + S-adenosyl-L-methionine = N(7)-methylguanosine(46) in tRNA + S-adenosyl-L-homocysteine. Its pathway is tRNA modification; N(7)-methylguanine-tRNA biosynthesis. Its function is as follows. Catalyzes the formation of N(7)-methylguanine at position 46 (m7G46) in tRNA. The chain is tRNA (guanine-N(7)-)-methyltransferase from Granulibacter bethesdensis (strain ATCC BAA-1260 / CGDNIH1).